A 250-amino-acid chain; its full sequence is 3-deoxy-manno-octulosonate cytidylyltransferase (250 aa).

The protein belongs to the KdsB family.

It is found in the cytoplasm. It catalyses the reaction 3-deoxy-alpha-D-manno-oct-2-ulosonate + CTP = CMP-3-deoxy-beta-D-manno-octulosonate + diphosphate. Its pathway is nucleotide-sugar biosynthesis; CMP-3-deoxy-D-manno-octulosonate biosynthesis; CMP-3-deoxy-D-manno-octulosonate from 3-deoxy-D-manno-octulosonate and CTP: step 1/1. The protein operates within bacterial outer membrane biogenesis; lipopolysaccharide biosynthesis. Functionally, activates KDO (a required 8-carbon sugar) for incorporation into bacterial lipopolysaccharide in Gram-negative bacteria. The sequence is that of 3-deoxy-manno-octulosonate cytidylyltransferase from Yersinia pseudotuberculosis serotype O:1b (strain IP 31758).